A 246-amino-acid chain; its full sequence is Pyridoxine 5'-phosphate synthase (246 aa).

3-amino-2-oxopropyl phosphate is bound at residue asparagine 9. 11-12 is a binding site for 1-deoxy-D-xylulose 5-phosphate; sequence DH. Position 20 (arginine 20) interacts with 3-amino-2-oxopropyl phosphate. The Proton acceptor role is filled by histidine 45. Residues arginine 47 and histidine 52 each coordinate 1-deoxy-D-xylulose 5-phosphate. Catalysis depends on glutamate 72, which acts as the Proton acceptor. Residue threonine 102 participates in 1-deoxy-D-xylulose 5-phosphate binding. Residue histidine 193 is the Proton donor of the active site. Residues glycine 194 and 215 to 216 contribute to the 3-amino-2-oxopropyl phosphate site; that span reads GH.

Belongs to the PNP synthase family. In terms of assembly, homooctamer; tetramer of dimers.

Its subcellular location is the cytoplasm. The catalysed reaction is 3-amino-2-oxopropyl phosphate + 1-deoxy-D-xylulose 5-phosphate = pyridoxine 5'-phosphate + phosphate + 2 H2O + H(+). Its pathway is cofactor biosynthesis; pyridoxine 5'-phosphate biosynthesis; pyridoxine 5'-phosphate from D-erythrose 4-phosphate: step 5/5. Its function is as follows. Catalyzes the complicated ring closure reaction between the two acyclic compounds 1-deoxy-D-xylulose-5-phosphate (DXP) and 3-amino-2-oxopropyl phosphate (1-amino-acetone-3-phosphate or AAP) to form pyridoxine 5'-phosphate (PNP) and inorganic phosphate. The sequence is that of Pyridoxine 5'-phosphate synthase from Colwellia psychrerythraea (strain 34H / ATCC BAA-681) (Vibrio psychroerythus).